The chain runs to 254 residues: 5'-nucleotidase SurE (254 aa).

Positions 8, 9, 40, and 93 each coordinate a divalent metal cation.

The protein belongs to the SurE nucleotidase family. The cofactor is a divalent metal cation.

Its subcellular location is the cytoplasm. It catalyses the reaction a ribonucleoside 5'-phosphate + H2O = a ribonucleoside + phosphate. In terms of biological role, nucleotidase that shows phosphatase activity on nucleoside 5'-monophosphates. The sequence is that of 5'-nucleotidase SurE from Rhizorhabdus wittichii (strain DSM 6014 / CCUG 31198 / JCM 15750 / NBRC 105917 / EY 4224 / RW1) (Sphingomonas wittichii).